An 80-amino-acid polypeptide reads, in one-letter code: Acyl carrier protein (80 aa).

Residues 2–77 (KNIEERIKKI…KSIDFIQNKN (76 aa)) form the Carrier domain. Ser37 is subject to O-(pantetheine 4'-phosphoryl)serine.

This sequence belongs to the acyl carrier protein (ACP) family. In terms of processing, 4'-phosphopantetheine is transferred from CoA to a specific serine of apo-ACP by AcpS. This modification is essential for activity because fatty acids are bound in thioester linkage to the sulfhydryl of the prosthetic group.

It localises to the cytoplasm. It functions in the pathway lipid metabolism; fatty acid biosynthesis. In terms of biological role, carrier of the growing fatty acid chain in fatty acid biosynthesis. In Buchnera aphidicola subsp. Acyrthosiphon pisum (strain 5A), this protein is Acyl carrier protein.